We begin with the raw amino-acid sequence, 109 residues long: Large ribosomal subunit protein uL1 (109 aa).

This sequence belongs to the universal ribosomal protein uL1 family. Part of the 50S ribosomal subunit.

Its function is as follows. Binds directly to 23S rRNA. The L1 stalk is quite mobile in the ribosome, and is involved in E site tRNA release. In terms of biological role, protein L1 is also a translational repressor protein, it controls the translation of the L11 operon by binding to its mRNA. This is Large ribosomal subunit protein uL1 (rplA) from Aquifex pyrophilus.